A 312-amino-acid polypeptide reads, in one-letter code: Protoheme IX farnesyltransferase (312 aa).

9 helical membrane-spanning segments follow: residues 29-49, 50-70, 90-110, 117-137, 150-170, 177-197, 223-243, 248-268, and 292-312; these read VMSLVVFTGLVGLVVAPGHMN, PVLAAISILCVAVGAGASGAL, IPAGIIAPNQVLAFGLTLSAF, LMVNWLSAALLAFTIFFYAVV, IVIGGAAGAFPPMIGWAAATG, VVLFMIIFLWTPPHFWALSLF, ALFYSIIMAPVGVLPWVLGFA, GAISTLLGLAFVYYAWRMWVA, and LFAVLLVEALVMKALIAFGGF.

The protein belongs to the UbiA prenyltransferase family. Protoheme IX farnesyltransferase subfamily.

The protein localises to the cell inner membrane. The enzyme catalyses heme b + (2E,6E)-farnesyl diphosphate + H2O = Fe(II)-heme o + diphosphate. It functions in the pathway porphyrin-containing compound metabolism; heme O biosynthesis; heme O from protoheme: step 1/1. Functionally, converts heme B (protoheme IX) to heme O by substitution of the vinyl group on carbon 2 of heme B porphyrin ring with a hydroxyethyl farnesyl side group. This Brucella anthropi (strain ATCC 49188 / DSM 6882 / CCUG 24695 / JCM 21032 / LMG 3331 / NBRC 15819 / NCTC 12168 / Alc 37) (Ochrobactrum anthropi) protein is Protoheme IX farnesyltransferase.